Here is a 192-residue protein sequence, read N- to C-terminus: Erythropoietin (192 aa).

A signal peptide spans 1-26; that stretch reads MGVPERPTLLLLLSLLLIPLGLPVLC. The cysteines at positions 33 and 187 are disulfide-linked. 3 N-linked (GlcNAc...) asparagine glycosylation sites follow: asparagine 50, asparagine 64, and asparagine 109.

Belongs to the EPO/TPO family. Produced by kidney or liver of adult mammals and by liver of fetal or neonatal mammals.

The protein localises to the secreted. In terms of biological role, hormone involved in the regulation of erythrocyte proliferation and differentiation and the maintenance of a physiological level of circulating erythrocyte mass. Binds to EPOR leading to EPOR dimerization and JAK2 activation thereby activating specific downstream effectors, including STAT1 and STAT3. The polypeptide is Erythropoietin (Epo) (Mus musculus (Mouse)).